Here is a 293-residue protein sequence, read N- to C-terminus: UPF0282 protein MK0213 (293 aa).

It belongs to the UPF0282 family.

The polypeptide is UPF0282 protein MK0213 (Methanopyrus kandleri (strain AV19 / DSM 6324 / JCM 9639 / NBRC 100938)).